The chain runs to 52 residues: Disintegrin multisquamatin (52 aa).

One can recognise a Disintegrin domain in the interval 1–50 (EGEECESGPCCRNCKFLKEGTICKRARGDDMDDYCNGKTCDCPRNPHKGP). 4 disulfides stabilise this stretch: Cys5/Cys14, Cys10/Cys35, Cys11/Cys40, and Cys23/Cys42. Residues 27–29 (RGD) carry the Cell attachment site motif.

The protein belongs to the venom metalloproteinase (M12B) family. P-II subfamily. P-IIa sub-subfamily. Monomer. Expressed by the venom gland.

The protein localises to the secreted. Its function is as follows. Inhibits ADP-induced human, canine and rabbit platelet aggregation by binding with high affinity to alpha-IIb/beta-3 (ITGA2B/ITGB3). This is Disintegrin multisquamatin from Echis multisquamatus (Central Asian sand viper).